The following is a 437-amino-acid chain: Serine--tRNA ligase (437 aa).

Position 244–246 (244–246 (TAE)) interacts with L-serine. 275–277 (RSE) lines the ATP pocket. L-serine is bound at residue Glu-298. Position 362–365 (362–365 (EISS)) interacts with ATP. Residue Ser-397 participates in L-serine binding.

It belongs to the class-II aminoacyl-tRNA synthetase family. Type-1 seryl-tRNA synthetase subfamily. Homodimer. The tRNA molecule binds across the dimer.

The protein resides in the cytoplasm. It catalyses the reaction tRNA(Ser) + L-serine + ATP = L-seryl-tRNA(Ser) + AMP + diphosphate + H(+). The enzyme catalyses tRNA(Sec) + L-serine + ATP = L-seryl-tRNA(Sec) + AMP + diphosphate + H(+). It functions in the pathway aminoacyl-tRNA biosynthesis; selenocysteinyl-tRNA(Sec) biosynthesis; L-seryl-tRNA(Sec) from L-serine and tRNA(Sec): step 1/1. In terms of biological role, catalyzes the attachment of serine to tRNA(Ser). Is also able to aminoacylate tRNA(Sec) with serine, to form the misacylated tRNA L-seryl-tRNA(Sec), which will be further converted into selenocysteinyl-tRNA(Sec). The polypeptide is Serine--tRNA ligase (Nitrosomonas europaea (strain ATCC 19718 / CIP 103999 / KCTC 2705 / NBRC 14298)).